We begin with the raw amino-acid sequence, 650 residues long: Chaperone protein DnaK (650 aa).

The residue at position 200 (threonine 200) is a Phosphothreonine; by autocatalysis. A compositionally biased stretch (low complexity) spans 612–636 (QQAGAAGAAGAAEGAAHAGGAQQAA). Residues 612-650 (QQAGAAGAAGAAEGAAHAGGAQQAADDVVDAEFKEVKKD) are disordered.

The protein belongs to the heat shock protein 70 family.

Acts as a chaperone. This Burkholderia ambifaria (strain ATCC BAA-244 / DSM 16087 / CCUG 44356 / LMG 19182 / AMMD) (Burkholderia cepacia (strain AMMD)) protein is Chaperone protein DnaK.